The following is a 191-amino-acid chain: Xanthine phosphoribosyltransferase (191 aa).

Residues Leu-20 and Asn-27 each contribute to the xanthine site. 128–132 (ANGQA) lines the 5-phospho-alpha-D-ribose 1-diphosphate pocket. Lys-156 serves as a coordination point for xanthine.

The protein belongs to the purine/pyrimidine phosphoribosyltransferase family. Xpt subfamily. Homodimer.

Its subcellular location is the cytoplasm. The catalysed reaction is XMP + diphosphate = xanthine + 5-phospho-alpha-D-ribose 1-diphosphate. It participates in purine metabolism; XMP biosynthesis via salvage pathway; XMP from xanthine: step 1/1. Converts the preformed base xanthine, a product of nucleic acid breakdown, to xanthosine 5'-monophosphate (XMP), so it can be reused for RNA or DNA synthesis. This Levilactobacillus brevis (strain ATCC 367 / BCRC 12310 / CIP 105137 / JCM 1170 / LMG 11437 / NCIMB 947 / NCTC 947) (Lactobacillus brevis) protein is Xanthine phosphoribosyltransferase.